The chain runs to 215 residues: 2-phospho-L-lactate guanylyltransferase (215 aa).

It belongs to the CofC family. As to quaternary structure, homodimer.

The catalysed reaction is (2S)-2-phospholactate + GTP + H(+) = (2S)-lactyl-2-diphospho-5'-guanosine + diphosphate. The protein operates within cofactor biosynthesis; coenzyme F420 biosynthesis. In terms of biological role, guanylyltransferase that catalyzes the activation of (2S)-2-phospholactate (2-PL) as (2S)-lactyl-2-diphospho-5'-guanosine, via the condensation of 2-PL with GTP. It is involved in the biosynthesis of coenzyme F420, a hydride carrier cofactor. This is 2-phospho-L-lactate guanylyltransferase from Methanoculleus marisnigri (strain ATCC 35101 / DSM 1498 / JR1).